Consider the following 324-residue polypeptide: Olfactory receptor 8U3 (324 aa).

The Extracellular segment spans residues M1–A25. Residues P26–I46 traverse the membrane as a helical segment. The Cytoplasmic portion of the chain corresponds to T47 to R54. The chain crosses the membrane as a helical span at residues L55 to S75. The Extracellular segment spans residues A76 to T99. Cysteines 97 and 189 form a disulfide. Residues Q100 to Y120 traverse the membrane as a helical segment. Topologically, residues D121–R139 are cytoplasmic. A helical membrane pass occupies residues V140–T160. Over V161 to E196 the chain is Extracellular. The chain crosses the membrane as a helical span at residues I197–S217. Topologically, residues Y218–A237 are cytoplasmic. Residues I238 to M258 form a helical membrane-spanning segment. The Extracellular portion of the chain corresponds to Y259–D271. Residue N265 is glycosylated (N-linked (GlcNAc...) asparagine). A helical membrane pass occupies residues K272–L292. Residues R293–Y324 lie on the Cytoplasmic side of the membrane.

Belongs to the G-protein coupled receptor 1 family.

Its subcellular location is the cell membrane. In terms of biological role, odorant receptor. The chain is Olfactory receptor 8U3 from Homo sapiens (Human).